The chain runs to 570 residues: PTS system lactose-specific EIICB component (570 aa).

Residues 9-410 (IEKGKPFFEK…VVDIIIYYPF (402 aa)) enclose the PTS EIIC type-3 domain. Transmembrane regions (helical) follow at residues 31-51 (GFIS…IAYV), 65-85 (AILM…VAGT), 104-124 (INFI…ASDP), 133-153 (AFMG…TVIV), 178-198 (FKDL…DLVI), 223-243 (GWIG…VGIH), 283-303 (MFIV…MFMW), 340-360 (VFFI…KLFV), and 382-402 (IIMG…LIVV). The 104-residue stretch at 467–570 (QTNVLVLCAG…LDFVQQQFEN (104 aa)) folds into the PTS EIIB type-3 domain. Cys-474 acts as the Phosphocysteine intermediate; for EIIB activity in catalysis. Cys-474 is subject to Phosphocysteine; by EIIA.

It is found in the cell membrane. It carries out the reaction lactose(out) + N(pros)-phospho-L-histidyl-[protein] = lactose 6-phosphate(in) + L-histidyl-[protein]. The phosphoenolpyruvate-dependent sugar phosphotransferase system (sugar PTS), a major carbohydrate active transport system, catalyzes the phosphorylation of incoming sugar substrates concomitantly with their translocation across the cell membrane. The enzyme II LacEF PTS system is involved in lactose transport. The protein is PTS system lactose-specific EIICB component of Staphylococcus aureus (strain MSSA476).